We begin with the raw amino-acid sequence, 1303 residues long: DNA-directed RNA polymerase subunit beta (1303 aa).

This sequence belongs to the RNA polymerase beta chain family. The RNAP catalytic core consists of 2 alpha, 1 beta, 1 beta' and 1 omega subunit. When a sigma factor is associated with the core the holoenzyme is formed, which can initiate transcription.

The enzyme catalyses RNA(n) + a ribonucleoside 5'-triphosphate = RNA(n+1) + diphosphate. In terms of biological role, DNA-dependent RNA polymerase catalyzes the transcription of DNA into RNA using the four ribonucleoside triphosphates as substrates. In Chlorobaculum tepidum (strain ATCC 49652 / DSM 12025 / NBRC 103806 / TLS) (Chlorobium tepidum), this protein is DNA-directed RNA polymerase subunit beta.